Reading from the N-terminus, the 252-residue chain is Ribosomal RNA large subunit methyltransferase E (252 aa).

5 residues coordinate S-adenosyl-L-methionine: Gly48, Trp50, Asp68, Asp84, and Asp107. Lys147 acts as the Proton acceptor in catalysis. One can recognise a TRAM domain in the interval 194-252 (PVREGDTLEVEIDNLGDEGDGVAKVDGYTLFVSGAEPGDAPEVRVTDVKPRFGFAETLE).

Belongs to the class I-like SAM-binding methyltransferase superfamily. RNA methyltransferase RlmE family.

The protein localises to the cytoplasm. It carries out the reaction uridine(2552) in 23S rRNA + S-adenosyl-L-methionine = 2'-O-methyluridine(2552) in 23S rRNA + S-adenosyl-L-homocysteine + H(+). Its function is as follows. Specifically methylates the uridine in position 2552 of 23S rRNA at the 2'-O position of the ribose in the fully assembled 50S ribosomal subunit. In Natronomonas pharaonis (strain ATCC 35678 / DSM 2160 / CIP 103997 / JCM 8858 / NBRC 14720 / NCIMB 2260 / Gabara) (Halobacterium pharaonis), this protein is Ribosomal RNA large subunit methyltransferase E.